The sequence spans 424 residues: Serine--tRNA ligase (424 aa).

231 to 233 (TAE) contacts L-serine. ATP is bound at residue 262 to 264 (RSE). E285 contributes to the L-serine binding site. Residue 349–352 (EISS) coordinates ATP. S385 is an L-serine binding site.

This sequence belongs to the class-II aminoacyl-tRNA synthetase family. Type-1 seryl-tRNA synthetase subfamily. Homodimer. The tRNA molecule binds across the dimer.

It is found in the cytoplasm. It catalyses the reaction tRNA(Ser) + L-serine + ATP = L-seryl-tRNA(Ser) + AMP + diphosphate + H(+). The catalysed reaction is tRNA(Sec) + L-serine + ATP = L-seryl-tRNA(Sec) + AMP + diphosphate + H(+). The protein operates within aminoacyl-tRNA biosynthesis; selenocysteinyl-tRNA(Sec) biosynthesis; L-seryl-tRNA(Sec) from L-serine and tRNA(Sec): step 1/1. In terms of biological role, catalyzes the attachment of serine to tRNA(Ser). Is also able to aminoacylate tRNA(Sec) with serine, to form the misacylated tRNA L-seryl-tRNA(Sec), which will be further converted into selenocysteinyl-tRNA(Sec). This chain is Serine--tRNA ligase, found in Bacillus pumilus (strain SAFR-032).